Consider the following 1393-residue polypeptide: DNA-directed RNA polymerase subunit beta (1393 aa).

The protein belongs to the RNA polymerase beta chain family. The RNAP catalytic core consists of 2 alpha, 1 beta, 1 beta' and 1 omega subunit. When a sigma factor is associated with the core the holoenzyme is formed, which can initiate transcription.

The catalysed reaction is RNA(n) + a ribonucleoside 5'-triphosphate = RNA(n+1) + diphosphate. Functionally, DNA-dependent RNA polymerase catalyzes the transcription of DNA into RNA using the four ribonucleoside triphosphates as substrates. This chain is DNA-directed RNA polymerase subunit beta, found in Rhodospirillum rubrum (strain ATCC 11170 / ATH 1.1.1 / DSM 467 / LMG 4362 / NCIMB 8255 / S1).